Consider the following 434-residue polypeptide: Tryptophan synthase beta chain 2 (434 aa).

Lysine 110 is subject to N6-(pyridoxal phosphate)lysine.

This sequence belongs to the TrpB family. In terms of assembly, tetramer of two alpha and two beta chains. Requires pyridoxal 5'-phosphate as cofactor.

The catalysed reaction is (1S,2R)-1-C-(indol-3-yl)glycerol 3-phosphate + L-serine = D-glyceraldehyde 3-phosphate + L-tryptophan + H2O. It participates in amino-acid biosynthesis; L-tryptophan biosynthesis; L-tryptophan from chorismate: step 5/5. Its function is as follows. The beta subunit is responsible for the synthesis of L-tryptophan from indole and L-serine. In Aquifex aeolicus (strain VF5), this protein is Tryptophan synthase beta chain 2 (trpB2).